The chain runs to 670 residues: Catalase (670 aa).

Residues histidine 61 and asparagine 132 contribute to the active site. Tyrosine 345 lines the heme pocket.

The protein belongs to the catalase family. In terms of assembly, homotetramer. Requires heme as cofactor.

It is found in the peroxisome matrix. It catalyses the reaction 2 H2O2 = O2 + 2 H2O. Its function is as follows. Catalyzes the degradation of hydrogen peroxide (H(2)O(2)) generated by peroxisomal oxidases to water and oxygen, thereby protecting cells from the toxic effects of hydrogen peroxide. This is Catalase from Penicillium janthinellum (Penicillium vitale).